The sequence spans 116 residues: uncharacterized protein (116 aa).

A helical transmembrane segment spans residues 58-78; it reads IIVDFKFIFQIFLILSFGFFA.

Its subcellular location is the membrane. This is an uncharacterized protein from Rickettsia prowazekii (strain Madrid E).